Consider the following 413-residue polypeptide: Histidine--tRNA ligase (413 aa).

Belongs to the class-II aminoacyl-tRNA synthetase family. In terms of assembly, homodimer.

The protein localises to the cytoplasm. It catalyses the reaction tRNA(His) + L-histidine + ATP = L-histidyl-tRNA(His) + AMP + diphosphate + H(+). The sequence is that of Histidine--tRNA ligase (hisS) from Rickettsia prowazekii (strain Madrid E).